We begin with the raw amino-acid sequence, 302 residues long: Cobalt-precorrin-6A reductase (302 aa).

Over residues 1-10 (MQTPEIKEGT) the composition is skewed to basic and acidic residues. Positions 1–37 (MQTPEIKEGTEQYLWRRKTMNPGDKGVKRKGSDRQRE) are disordered.

The protein belongs to the precorrin-6x reductase family.

It carries out the reaction Co-precorrin-6B + NAD(+) = Co-precorrin-6A + NADH + H(+). It participates in cofactor biosynthesis; adenosylcobalamin biosynthesis; cob(II)yrinate a,c-diamide from sirohydrochlorin (anaerobic route): step 7/10. Catalyzes the reduction of the macrocycle of cobalt-precorrin-6A to cobalt-precorrin-6B. The protein is Cobalt-precorrin-6A reductase (cbiJ) of Methanothermobacter thermautotrophicus (strain ATCC 29096 / DSM 1053 / JCM 10044 / NBRC 100330 / Delta H) (Methanobacterium thermoautotrophicum).